The sequence spans 511 residues: Histidine ammonia-lyase (511 aa).

Positions 142-144 (ASG) form a cross-link, 5-imidazolinone (Ala-Gly). 2,3-didehydroalanine (Ser) is present on serine 143.

Belongs to the PAL/histidase family. Contains an active site 4-methylidene-imidazol-5-one (MIO), which is formed autocatalytically by cyclization and dehydration of residues Ala-Ser-Gly.

It is found in the cytoplasm. It carries out the reaction L-histidine = trans-urocanate + NH4(+). The protein operates within amino-acid degradation; L-histidine degradation into L-glutamate; N-formimidoyl-L-glutamate from L-histidine: step 1/3. This chain is Histidine ammonia-lyase, found in Chelativorans sp. (strain BNC1).